The primary structure comprises 330 residues: Ornithine carbamoyltransferase (330 aa).

Residues 57-60 (STRT), Gln84, Arg108, and 135-138 (HPTQ) each bind carbamoyl phosphate. L-ornithine-binding positions include Asn168, Asp232, and 236-237 (SM). Carbamoyl phosphate contacts are provided by residues 273–274 (CL) and Arg318.

It belongs to the aspartate/ornithine carbamoyltransferase superfamily. OTCase family.

It is found in the cytoplasm. The catalysed reaction is carbamoyl phosphate + L-ornithine = L-citrulline + phosphate + H(+). It participates in amino-acid biosynthesis; L-arginine biosynthesis; L-arginine from L-ornithine and carbamoyl phosphate: step 1/3. Reversibly catalyzes the transfer of the carbamoyl group from carbamoyl phosphate (CP) to the N(epsilon) atom of ornithine (ORN) to produce L-citrulline. This chain is Ornithine carbamoyltransferase, found in Alkaliphilus metalliredigens (strain QYMF).